Reading from the N-terminus, the 69-residue chain is Amphipathic peptide CT2 (69 aa).

Residues 1-23 form the signal peptide; it reads MKTQFVILIVAVVLLQLIANSEA. Phenylalanine 36 is subject to Phenylalanine amide. The propeptide occupies 40-69; the sequence is GLRNLDNLDDDIFEPEMSEADLRYLQDLLR.

It belongs to the non-disulfide-bridged peptide (NDBP) superfamily. Short antimicrobial peptide (group 4) family. As to expression, expressed by the venom gland.

It localises to the secreted. The protein localises to the target cell membrane. Its function is as follows. Amphipathic peptide that shows antibacterial activities against both Gram-positive (MIC=10 uM, 20 uM and 20 uM against S.aureus, B.subtilis and S.agalactiae, respectively) and Gram-negative bacteria (MIC=20 uM, 10 uM, and 10 uM against E.coli, S.typhi, and P.aeruginosa, respectively). Is mildly hemolytic at its MIC range, but shows a strong cytotoxic activity at higher concentrations, reaching 84% lysis at 50 uM. The polypeptide is Amphipathic peptide CT2 (Vaejovis mexicanus smithi (Mexican scorpion)).